Here is an 86-residue protein sequence, read N- to C-terminus: Large ribosomal subunit protein bL27 (86 aa).

The interval 1–22 (MAHKKAGGSTRNGRDSESKRLG) is disordered.

It belongs to the bacterial ribosomal protein bL27 family.

In Vibrio cholerae serotype O1 (strain ATCC 39315 / El Tor Inaba N16961), this protein is Large ribosomal subunit protein bL27.